Consider the following 198-residue polypeptide: Dermorphin-2 (198 aa).

The first 20 residues, 1-20 (MSFLKKSLLLILFLGLVSLS), serve as a signal peptide directing secretion. A propeptide spanning residues 21-45 (VCKEEKRVSEEENENEENHEEGSEM) is cleaved from the precursor. The tract at residues 24–198 (EEKRVSEEEN…AFGYPSGEAK (175 aa)) is disordered. A49 bears the D-alanine (Ala) mark. Serine amide is present on S54. The span at 56–65 (EAKKIKRESE) shows a compositional bias: basic and acidic residues. Positions 56–80 (EAKKIKRESEEEKEIEENHEEGSEM) are excised as a propeptide. Position 84 is a D-alanine (Ala) (A84). S89 is subject to Serine amide. The propeptide occupies 91–115 (EAKKIKRESEEENENEENHEEGSEM). Over residues 100–109 (EEENENEENH) the composition is skewed to acidic residues. D-alanine (Ala) is present on A119. The residue at position 124 (S124) is a Serine amide. Residues 126-135 (EAKKIKRESE) show a composition bias toward basic and acidic residues. The propeptide occupies 126–150 (EAKKIKRESEEEKEIEENHEEGSEM). At A154 the chain carries D-alanine (Ala). S159 carries the serine amide modification. The propeptide occupies 161 to 185 (EAKKIKRESEEENENEENHEEGSEM). Residues 170–179 (EEENENEENH) are compositionally biased toward acidic residues. Position 189 is a D-alanine (Ala) (A189). Serine amide is present on S194. A propeptide spanning residues 196–198 (EAK) is cleaved from the precursor.

It belongs to the frog skin active peptide (FSAP) family. Dermorphin subfamily. As to expression, expressed by the skin glands.

It is found in the secreted. Dermorphin has a very potent opiate-like activity. It has high affinity and selectivity for mu-type opioid receptors. The sequence is that of Dermorphin-2 from Phyllomedusa sauvagei (Sauvage's leaf frog).